We begin with the raw amino-acid sequence, 310 residues long: Tagatose-6-phosphate kinase (310 aa).

It belongs to the carbohydrate kinase PfkB family. LacC subfamily.

The catalysed reaction is D-tagatofuranose 6-phosphate + ATP = D-tagatofuranose 1,6-bisphosphate + ADP + H(+). It participates in carbohydrate metabolism; D-tagatose 6-phosphate degradation; D-glyceraldehyde 3-phosphate and glycerone phosphate from D-tagatose 6-phosphate: step 1/2. The protein is Tagatose-6-phosphate kinase of Streptococcus agalactiae serotype V (strain ATCC BAA-611 / 2603 V/R).